The sequence spans 690 residues: Glutaminase A (690 aa).

Residues 1–20 form the signal peptide; that stretch reads MMHFLSFCLSVASLVSYAGA. N80, N96, N435, N508, N528, N538, and N571 each carry an N-linked (GlcNAc...) asparagine glycan.

It belongs to the fungal glutaminase gtaA family.

The protein resides in the secreted. It catalyses the reaction L-glutamine + H2O = L-glutamate + NH4(+). With respect to regulation, activity is inhibited by about 80% in the presence of 18% sodium chloride. Its function is as follows. Glutaminase catalyzes the hydrolysis of glutamine to glutamic acid and plays a key role in nitrogen metabolism. Catalyzes the hydrolysis not only of L-glutamine but also of D-glutamine. The sequence is that of Glutaminase A from Aspergillus oryzae (strain ATCC 42149 / RIB 40) (Yellow koji mold).